Here is a 156-residue protein sequence, read N- to C-terminus: Protein GLUTAMINE DUMPER 4 (156 aa).

The Extracellular portion of the chain corresponds to 1–39 (MRPLSIKPTSLDVARHATSVESFGNHRPPISPWHSPVPY). The chain crosses the membrane as a helical span at residues 40–60 (LFGGLAAMLGLIAFALLILAC). Residues 61-156 (SYWRLSTSGD…AKENEETTSQ (96 aa)) lie on the Cytoplasmic side of the membrane. Positions 67-87 (TSGDDSGERVDEEKESRSGVK) are disordered. The span at 72–84 (SGERVDEEKESRS) shows a compositional bias: basic and acidic residues. The short motif at 99–103 (VIMAG) is the VIMAG element. A disordered region spans residues 136–156 (AGEEKMGDREKAKENEETTSQ).

Belongs to the GLUTAMINE DUMPER 1 (TC 9.B.60) family. In terms of tissue distribution, expressed in the vascular tissues, even in the minor veins of the leaves.

It localises to the membrane. Probable subunit of an amino acid transporter involved in the regulation of the amino acid metabolism. Stimulates amino acid export by activating nonselective amino acid facilitators. This chain is Protein GLUTAMINE DUMPER 4 (GDU4), found in Arabidopsis thaliana (Mouse-ear cress).